The chain runs to 341 residues: Phosphoribosylformylglycinamidine cyclo-ligase (341 aa).

Belongs to the AIR synthase family.

The protein resides in the cytoplasm. The enzyme catalyses 2-formamido-N(1)-(5-O-phospho-beta-D-ribosyl)acetamidine + ATP = 5-amino-1-(5-phospho-beta-D-ribosyl)imidazole + ADP + phosphate + H(+). It functions in the pathway purine metabolism; IMP biosynthesis via de novo pathway; 5-amino-1-(5-phospho-D-ribosyl)imidazole from N(2)-formyl-N(1)-(5-phospho-D-ribosyl)glycinamide: step 2/2. In Caldicellulosiruptor bescii (strain ATCC BAA-1888 / DSM 6725 / KCTC 15123 / Z-1320) (Anaerocellum thermophilum), this protein is Phosphoribosylformylglycinamidine cyclo-ligase.